We begin with the raw amino-acid sequence, 348 residues long: MTKENKPRDIVIVGAGVIGLTTAWILSDLGLAPRIKVIAKYTPEDRSVEYTSPWAGANFCSISATDDNALRWDKITYHRFAYLAKTRPEAGIRFADLRELWEYEPKHDKIRSWNTYVRDFKVIPEKDLPGECIYGHKATTFLINAPHYLNYMYKLLIEAGVEFEKKELSHIKETVEETPEASVVFNCTGLWASKLGGVEDPDVYPTRGHVVLVKAPHVTETRILNGKNSDTYIIPRPLNGGVICGGFMQPGNWDREIHPEDTLDILKRTSALMPELFHGKGPEGAEIIQECVGFRPSRKGGARVELDVVPGTSVPLVHDYGASGTGYQAGYGMALDSVMLALPKIKLA.

FAD contacts are provided by Ala15, Ile18, Lys40, Ser52, Gly56, and Asn58. Residues Tyr232 and Arg295 each contribute to the (R)-lactate site. Positions 232 and 295 each coordinate anthranilate. FAD-binding residues include Arg295, Ser323, Gly326, Tyr327, and Gln328.

Belongs to the DAMOX/DASOX family. The cofactor is FAD.

It localises to the peroxisome. It catalyses the reaction a D-alpha-amino acid + O2 + H2O = a 2-oxocarboxylate + H2O2 + NH4(+). It carries out the reaction D-serine + O2 + H2O = 3-hydroxypyruvate + H2O2 + NH4(+). The enzyme catalyses D-alanine + O2 + H2O = pyruvate + H2O2 + NH4(+). The catalysed reaction is D-arginine + O2 + H2O = 5-guanidino-2-oxopentanoate + H2O2 + NH4(+). Functionally, catalyzes the oxidative deamination of D-amino acids with broad substrate specificity. Enables the organism to utilize D-amino acids as a source of nutrients. This chain is D-amino-acid oxidase, found in Schizosaccharomyces pombe (strain 972 / ATCC 24843) (Fission yeast).